The sequence spans 349 residues: tRNA pseudouridine synthase D (349 aa).

Catalysis depends on Asp-77, which acts as the Nucleophile. The region spanning 151 to 309 (GVPNYFGEQR…ETIDESTLKL (159 aa)) is the TRUD domain.

This sequence belongs to the pseudouridine synthase TruD family.

The catalysed reaction is uridine(13) in tRNA = pseudouridine(13) in tRNA. Functionally, responsible for synthesis of pseudouridine from uracil-13 in transfer RNAs. This chain is tRNA pseudouridine synthase D, found in Pseudoalteromonas translucida (strain TAC 125).